The chain runs to 280 residues: Undecaprenyl-diphosphatase (280 aa).

Helical transmembrane passes span 3–23 (IILL…EFLP), 45–65 (VDLF…YDYW), 88–108 (QLGL…FTFA), 115–135 (LFDP…IFYV), 150–170 (VGLK…IPGT), 191–211 (AEFS…LDLL), 225–245 (VLGI…RLLV), and 255–275 (IFAW…WGFG).

It belongs to the UppP family.

The protein resides in the cell inner membrane. It carries out the reaction di-trans,octa-cis-undecaprenyl diphosphate + H2O = di-trans,octa-cis-undecaprenyl phosphate + phosphate + H(+). Its function is as follows. Catalyzes the dephosphorylation of undecaprenyl diphosphate (UPP). Confers resistance to bacitracin. The chain is Undecaprenyl-diphosphatase from Psychrobacter arcticus (strain DSM 17307 / VKM B-2377 / 273-4).